The chain runs to 419 residues: Structure-specific endonuclease subunit slx4 (419 aa).

The protein belongs to the SLX4 family. Forms a heterodimer with slx1. Phosphorylated in response to DNA damage.

Its subcellular location is the nucleus. The protein resides in the nucleolus. In terms of biological role, regulatory subunit of the slx1-slx4 structure-specific endonuclease that resolves DNA secondary structures generated during DNA repair and recombination. Has endonuclease activity towards branched DNA substrates, introducing single-strand cuts in duplex DNA close to junctions with ss-DNA. Has a preference for stem-loop (SL) and splayed arm Y structures. Introduces a single-strand cut in duplex DNA on the 3' side of a double-strand/single-strand junction with respect to the single-strand moving 3' to 5' away from the junction. Plays a critical role in maintaining the integrity of the ribosomal DNA (rDNA) loci, where it has a role in re-starting stalled replication forks. The complex initiates homologous recombination (HR) events, used to maintain rDNA copy number, in the rDNA repeats that are processed by a mechanism that requires rad22, but not rhp51. Has Holliday junction resolvase activity in vitro. Slx4 is required for efficient processing of DNA substrates. This chain is Structure-specific endonuclease subunit slx4, found in Schizosaccharomyces pombe (strain 972 / ATCC 24843) (Fission yeast).